The sequence spans 121 residues: Large ribosomal subunit protein bL17 (121 aa).

This sequence belongs to the bacterial ribosomal protein bL17 family. As to quaternary structure, part of the 50S ribosomal subunit. Contacts protein L32.

The sequence is that of Large ribosomal subunit protein bL17 from Rubrobacter xylanophilus (strain DSM 9941 / JCM 11954 / NBRC 16129 / PRD-1).